The primary structure comprises 323 residues: Olfactory receptor 2T35 (323 aa).

Topologically, residues 1 to 26 (MGMEGLLQNSTNFVLTGLITHPAFPG) are extracellular. Residue N9 is glycosylated (N-linked (GlcNAc...) asparagine). Residues 27-50 (LLFAVVFSIFVVAITANLVMILLI) traverse the membrane as a helical segment. Residues 51 to 58 (HMDSRLHT) lie on the Cytoplasmic side of the membrane. Residues 59 to 80 (PMYFLLSQLSIMDTIYICITVP) traverse the membrane as a helical segment. Topologically, residues 81–101 (KMLQDLLSKDKTISFLGCAVQ) are extracellular. C98 and C189 form a disulfide bridge. A helical membrane pass occupies residues 102-120 (IFYLTLIGGEFFLLGLMAY). Topologically, residues 121–139 (DRYVAVCNPLRYPLLMNRR) are cytoplasmic. The chain crosses the membrane as a helical span at residues 140 to 158 (VCLFMVVGSWVGGSLDGFM). Topologically, residues 159–195 (LTPVTMSFPFCRSREINHFFCEIPAVLKLSCTDTSLY) are extracellular. A helical transmembrane segment spans residues 196–219 (ETLMYACCVLMLLIPLSVISVSYT). At 220 to 236 (HILLTVHRMNSAEGRRK) the chain is on the cytoplasmic side. The chain crosses the membrane as a helical span at residues 237 to 259 (AFATCSSHIMVVSVFYGAAFYTN). Over 260–272 (VLPHSYHTPEKDK) the chain is Extracellular. A helical transmembrane segment spans residues 273 to 292 (VVSAFYTILTPMLNPLIYSL). The Cytoplasmic segment spans residues 293–323 (RNKDVAAALRKVLGRCGSSQSIRVATVIRKG).

This sequence belongs to the G-protein coupled receptor 1 family.

Its subcellular location is the cell membrane. Functionally, odorant receptor. This Homo sapiens (Human) protein is Olfactory receptor 2T35 (OR2T35).